Reading from the N-terminus, the 158-residue chain is NAD(P)H-quinone oxidoreductase subunit J, chloroplastic (158 aa).

It belongs to the complex I 30 kDa subunit family. As to quaternary structure, NDH is composed of at least 16 different subunits, 5 of which are encoded in the nucleus.

It localises to the plastid. The protein localises to the chloroplast thylakoid membrane. The catalysed reaction is a plastoquinone + NADH + (n+1) H(+)(in) = a plastoquinol + NAD(+) + n H(+)(out). It carries out the reaction a plastoquinone + NADPH + (n+1) H(+)(in) = a plastoquinol + NADP(+) + n H(+)(out). Functionally, NDH shuttles electrons from NAD(P)H:plastoquinone, via FMN and iron-sulfur (Fe-S) centers, to quinones in the photosynthetic chain and possibly in a chloroplast respiratory chain. The immediate electron acceptor for the enzyme in this species is believed to be plastoquinone. Couples the redox reaction to proton translocation, and thus conserves the redox energy in a proton gradient. The protein is NAD(P)H-quinone oxidoreductase subunit J, chloroplastic of Morus indica (Mulberry).